Here is a 638-residue protein sequence, read N- to C-terminus: Epithelial sodium channel subunit delta (638 aa).

Over residues 1 to 13 the composition is skewed to basic and acidic residues; it reads MAEHRSMDGRMEA. The disordered stretch occupies residues 1 to 47; the sequence is MAEHRSMDGRMEAATRGGSHLQAAAQTPPRPGPPSAPPPPPKEGHQE. Over 1–86 the chain is Cytoplasmic; it reads MAEHRSMDGR…CSRGNRLKTT (86 aa). Residues 28–41 show a composition bias toward pro residues; the sequence is PPRPGPPSAPPPPP. A helical membrane pass occupies residues 87-107; sequence SWGLLSLGALVALCWQLGLLF. Residues 108-530 are Extracellular-facing; that stretch reads ERHWHRPVLM…VPQLLSAMGS (423 aa). Residues asparagine 166 and asparagine 384 are each glycosylated (N-linked (GlcNAc...) asparagine). The chain crosses the membrane as a helical span at residues 531–551; the sequence is LCSLWFGASVLSLLELLELLL. Over 552–638 the chain is Cytoplasmic; the sequence is DASALTLVLG…GPQPLETLDT (87 aa). The disordered stretch occupies residues 574–613; the sequence is RASPASGASSIKPEASQMPTPAGGTSDDPEPSGPHLPRVM.

The protein belongs to the amiloride-sensitive sodium channel (TC 1.A.6) family. SCNN1D subfamily. Can form an alternative heterotrimeric epithelial sodium channel (ENaC), composed of a delta (SCNN1D), beta (SCNN1B), and gamma (SCNN1G) subunit, where the delta (SCNN1D) subunit replaces the alpha (SCNN1A) subunit.

It localises to the apical cell membrane. It catalyses the reaction Na(+)(in) = Na(+)(out). Its activity is regulated as follows. Originally identified and characterized by its inhibition by the diuretic drug amiloride. Potential alternative pore-forming subunit of the epithelial sodium channel (ENaC), capable of replacing the alpha/SCNN1A subunit, creating a more active channel with distinct properties. ENaC functions in epithelial tissues, where it facilitates the electrodiffusion of sodium ions from the extracellular fluid through the apical membrane of cells, with water following osmotically, regulating sodium balance and fluid homeostasis. This subunit could also function independently as a sodium channel or assemble into other tissue-specific heterotrimeric sodium channels. The protein is Epithelial sodium channel subunit delta of Pan troglodytes (Chimpanzee).